Consider the following 78-residue polypeptide: Xibalbin-13 1 (78 aa).

The N-terminal stretch at 1–27 (MKEANTRRYIHLCLVVVLVSTIITTEA) is a signal peptide. Residues 28–31 (EDDR) constitute a propeptide that is removed on maturation. Cystine bridges form between Cys-34-Cys-49, Cys-41-Cys-54, Cys-48-Cys-65, and Cys-56-Cys-63. Ser-76 is subject to Serine amide.

This sequence belongs to the xibalbin-13 family. As to expression, expressed by the venom gland.

The protein resides in the secreted. Functionally, probable neurotoxin. Strongly inhibits voltage-gated potassium channels (Kv1.1/KCNA1, Kv1.2/KCNA2, Kv1.3/KCNA3, and Kv1.6/KCNA6) and mildly inhibits sodium channels (Nav1.2/SCN2A, Nav1.4/SCN4A, Nav1.5/SCN5A, Nav1.6/SCN8A, and BgNav). Induces activation of protein kinase A type II (PKA-II) and MAP kinase Erk1/2 in primary nociceptive and non-nociceptive sensory neurons. Does not show cytotoxic activity. Does not have an impact on Ca2+, cAMP, and NO signaling in the cell types analyzed. Does not interfere with the adhesion of leukocytes to endothelial cells. The chain is Xibalbin-13 1 from Xibalbanus tulumensis (Blind cave remipede).